Reading from the N-terminus, the 266-residue chain is Undecaprenyl-diphosphatase (266 aa).

8 consecutive transmembrane segments (helical) span residues 1–21, 39–59, 83–103, 111–131, 144–164, 183–203, 218–238, and 246–266; these read MDTF…FLPI, QGLA…VLYF, SKLA…GFAL, LRGP…LWWA, TGWK…IPGT, AAAR…AILM, SLAL…HLFL, and MTPF…FIFM.

It belongs to the UppP family.

The protein localises to the cell inner membrane. It catalyses the reaction di-trans,octa-cis-undecaprenyl diphosphate + H2O = di-trans,octa-cis-undecaprenyl phosphate + phosphate + H(+). In terms of biological role, catalyzes the dephosphorylation of undecaprenyl diphosphate (UPP). Confers resistance to bacitracin. This chain is Undecaprenyl-diphosphatase, found in Shewanella woodyi (strain ATCC 51908 / MS32).